The sequence spans 347 residues: Putative GDP-L-fucose synthase 2 (347 aa).

A disordered region spans residues 1 to 20 (MPSQQRSSSGSTAKAGDADG). 41–47 (GHRGMVG) contributes to the NADP(+) binding site. The active-site Proton donor/acceptor is the Y168. NADP(+) contacts are provided by residues K172, 195–198 (PNNL), and H211. Substrate contacts are provided by R219, W234, R241, and E301.

This sequence belongs to the NAD(P)-dependent epimerase/dehydratase family. Fucose synthase subfamily. As to quaternary structure, homodimer.

It catalyses the reaction GDP-beta-L-fucose + NADP(+) = GDP-4-dehydro-alpha-D-rhamnose + NADPH + H(+). The protein operates within nucleotide-sugar biosynthesis; GDP-L-fucose biosynthesis via de novo pathway; GDP-L-fucose from GDP-alpha-D-mannose: step 2/2. In terms of biological role, catalyzes the two-step NADP-dependent conversion of GDP-4-dehydro-6-deoxy-D-mannose to GDP-fucose, involving an epimerase and a reductase reaction. This Oryza sativa subsp. japonica (Rice) protein is Putative GDP-L-fucose synthase 2.